Consider the following 272-residue polypeptide: Undecaprenyl-diphosphatase (272 aa).

A run of 8 helical transmembrane segments spans residues tyrosine 5–valine 25, alanine 45–tryptophan 65, histidine 88–phenylalanine 108, alanine 114–alanine 134, tyrosine 153–serine 172, tyrosine 189–leucine 209, glycine 221–isoleucine 241, and isoleucine 251–phenylalanine 271.

This sequence belongs to the UppP family.

It localises to the cell inner membrane. The enzyme catalyses di-trans,octa-cis-undecaprenyl diphosphate + H2O = di-trans,octa-cis-undecaprenyl phosphate + phosphate + H(+). Its function is as follows. Catalyzes the dephosphorylation of undecaprenyl diphosphate (UPP). Confers resistance to bacitracin. In Yersinia pseudotuberculosis serotype IB (strain PB1/+), this protein is Undecaprenyl-diphosphatase.